A 131-amino-acid chain; its full sequence is Fumarate reductase subunit C (131 aa).

The next 3 membrane-spanning stretches (helical) occupy residues 30 to 50, 63 to 83, and 109 to 129; these read EGTA…LFAL, FLQN…ALLH, and IIKS…FVAL.

This sequence belongs to the FrdC family. In terms of assembly, part of an enzyme complex containing four subunits: a flavoprotein (FrdA), an iron-sulfur protein (FrdB), and two hydrophobic anchor proteins (FrdC and FrdD).

The protein resides in the cell inner membrane. Its function is as follows. Two distinct, membrane-bound, FAD-containing enzymes are responsible for the catalysis of fumarate and succinate interconversion; fumarate reductase is used in anaerobic growth, and succinate dehydrogenase is used in aerobic growth. Anchors the catalytic components of the fumarate reductase complex to the cell inner membrane, binds quinones. This Shigella boydii serotype 4 (strain Sb227) protein is Fumarate reductase subunit C.